Consider the following 181-residue polypeptide: Shikimate kinase 2 (181 aa).

12–17 contacts ATP; it reads GCGKTT. Mg(2+)-binding residues include Thr16 and Asp32. Substrate-binding residues include Asp34, Arg58, and Gly79. Residues 112–126 are LID domain; it reads EAEPEAELRPTLTGK. Arg120 is a binding site for ATP. Arg139 contributes to the substrate binding site.

This sequence belongs to the shikimate kinase family. AroL subfamily. As to quaternary structure, monomer. It depends on Mg(2+) as a cofactor.

Its subcellular location is the cytoplasm. It catalyses the reaction shikimate + ATP = 3-phosphoshikimate + ADP + H(+). The protein operates within metabolic intermediate biosynthesis; chorismate biosynthesis; chorismate from D-erythrose 4-phosphate and phosphoenolpyruvate: step 5/7. In terms of biological role, catalyzes the specific phosphorylation of the 3-hydroxyl group of shikimic acid using ATP as a cosubstrate. The protein is Shikimate kinase 2 of Salmonella schwarzengrund (strain CVM19633).